The chain runs to 983 residues: Envelope glycoprotein gp160 (983 aa).

Residues 1-20 (MASKESKPSRTTRRGMEPPL) are compositionally biased toward basic and acidic residues. The interval 1 to 22 (MASKESKPSRTTRRGMEPPLRE) is disordered. A signal peptide spans 1 to 106 (MASKESKPSR…CLMWEVRKGN (106 aa)). Over 107–832 (QCQAEEVIAL…WSSWFSWLKY (726 aa)) the chain is Extracellular. N-linked (GlcNAc...) asparagine; by host glycans are attached at residues Asn-140, Asn-161, Asn-206, Asn-258, Asn-298, Asn-364, Asn-381, Asn-387, Asn-403, Asn-414, Asn-435, Asn-439, Asn-470, Asn-475, Asn-481, Asn-491, Asn-501, Asn-515, Asn-527, Asn-537, Asn-542, Asn-543, and Asn-568. Residues 657-677 (GIGLVIVLAIMAIIAAAGAGL) are fusion peptide. The stretch at 689–739 (RTAVQSLANATAAQQEVLEASYAMVQHIAKGIRILEARVARVEALVDRMMV) forms a coiled coil. Asn-697 carries N-linked (GlcNAc...) asparagine; by host glycosylation. The interval 723 to 739 (LEARVARVEALVDRMMV) is immunosuppression. N-linked (GlcNAc...) asparagine; by host glycosylation is found at Asn-765, Asn-772, Asn-788, and Asn-822. Residues 780–815 (EEIEQHEGNLSLLLREAALQVHIAQRDARRIPDAWK) adopt a coiled-coil conformation. Residues 833 to 853 (IPWIIMGIVGLMCFRILMCVI) form a helical membrane-spanning segment. Residues 854–983 (SMCLQAYKQV…PTLENDYVEL (130 aa)) are Cytoplasmic-facing. Cys-856 carries S-palmitoyl cysteine; by host lipidation.

In terms of assembly, the mature envelope protein (Env) consists of a trimer of SU-TM heterodimers attached by noncovalent interactions or by a labile interchain disulfide bond. In terms of processing, specific enzymatic cleavages in vivo yield mature proteins. Envelope glycoproteins are synthesized as an inactive precursor that is N-glycosylated and processed likely by host cell furin or by a furin-like protease in the Golgi to yield the mature SU and TM proteins. The cleavage site between SU and TM requires the minimal sequence [KR]-X-[KR]-R. The transmembrane protein is palmitoylated.

The protein resides in the virion membrane. It localises to the host cell membrane. Its function is as follows. The surface protein (SU) attaches the virus to the host cell by binding to its receptor. This interaction triggers the refolding of the transmembrane protein (TM) and is thought to activate its fusogenic potential by unmasking its fusion peptide. Fusion occurs at the host cell plasma membrane. Functionally, the transmembrane protein (TM) acts as a class I viral fusion protein. Under the current model, the protein has at least 3 conformational states: pre-fusion native state, pre-hairpin intermediate state, and post-fusion hairpin state. During viral and target cell membrane fusion, the coiled coil regions (heptad repeats) assume a trimer-of-hairpins structure, positioning the fusion peptide in close proximity to the C-terminal region of the ectodomain. The formation of this structure appears to drive apposition and subsequent fusion of viral and target cell membranes. Membranes fusion leads to delivery of the nucleocapsid into the cytoplasm. This is Envelope glycoprotein gp160 (env) from Maedi visna virus (strain KV1772) (MVV).